We begin with the raw amino-acid sequence, 405 residues long: Cytochrome b (405 aa).

Residues 44–64 traverse the membrane as a helical segment; that stretch reads FGSLAGIAMIIMIATGIFLAM. Heme b-binding residues include His94 and His108. 8 helical membrane passes run 97 to 117, 124 to 144, 163 to 183, 191 to 211, 245 to 265, 303 to 323, 338 to 358, and 368 to 388; these read GASM…YYGS, VLWW…FMGY, FSAI…GFSV, FFSL…LHMW, FGLG…PNFF, LGGV…PWLD, GFFW…AMPA, and LATI…GWFE. The heme b site is built by His195 and His209.

The protein belongs to the cytochrome b family. As to quaternary structure, the main subunits of complex b-c1 are: cytochrome b, cytochrome c1 and the Rieske protein. Heme b serves as cofactor.

The protein localises to the cell membrane. In terms of biological role, component of the ubiquinol-cytochrome c reductase complex (complex III or cytochrome b-c1 complex), which is a respiratory chain that generates an electrochemical potential coupled to ATP synthesis. The protein is Cytochrome b (petB) of Rhodospirillum rubrum.